A 499-amino-acid polypeptide reads, in one-letter code: Serine/threonine-protein kinase SSN3 (499 aa).

The segment at 1–21 (MSHSNPPTGASGGPGSASASA) is disordered. The Protein kinase domain maps to 61 to 442 (YQVIGFISSG…AAAALQHNFF (382 aa)). Residues 67-75 (ISSGTYGRV) and lysine 91 contribute to the ATP site. The active-site Proton acceptor is the aspartate 193. Disordered stretches follow at residues 332 to 376 (SASG…SAAA) and 463 to 499 (RRVSQEDNDIRTGSVPGTKRSGMPDDSMGRPGKRVKE). The span at 365 to 376 (SSSSANSSSAAA) shows a compositional bias: low complexity. Residues 463–472 (RRVSQEDNDI) show a composition bias toward basic and acidic residues.

This sequence belongs to the protein kinase superfamily. CMGC Ser/Thr protein kinase family. CDC2/CDKX subfamily. Component of the SRB8-11 complex, a regulatory module of the Mediator complex. Requires Mg(2+) as cofactor.

It localises to the nucleus. The catalysed reaction is L-seryl-[protein] + ATP = O-phospho-L-seryl-[protein] + ADP + H(+). It carries out the reaction L-threonyl-[protein] + ATP = O-phospho-L-threonyl-[protein] + ADP + H(+). It catalyses the reaction [DNA-directed RNA polymerase] + ATP = phospho-[DNA-directed RNA polymerase] + ADP + H(+). Its function is as follows. Component of the SRB8-11 complex. The SRB8-11 complex is a regulatory module of the Mediator complex which is itself involved in regulation of basal and activated RNA polymerase II-dependent transcription. The SRB8-11 complex may be involved in the transcriptional repression of a subset of genes regulated by Mediator. It may inhibit the association of the Mediator complex with RNA polymerase II to form the holoenzyme complex. The SRB8-11 complex phosphorylates the C-terminal domain (CTD) of the largest subunit of RNA polymerase II. The polypeptide is Serine/threonine-protein kinase SSN3 (SSN3) (Pyricularia oryzae (strain 70-15 / ATCC MYA-4617 / FGSC 8958) (Rice blast fungus)).